The chain runs to 478 residues: UDP-N-acetylmuramate--L-alanine ligase (478 aa).

Position 112–118 (112–118 (GTHGKTT)) interacts with ATP.

It belongs to the MurCDEF family.

The protein resides in the cytoplasm. It carries out the reaction UDP-N-acetyl-alpha-D-muramate + L-alanine + ATP = UDP-N-acetyl-alpha-D-muramoyl-L-alanine + ADP + phosphate + H(+). It participates in cell wall biogenesis; peptidoglycan biosynthesis. Functionally, cell wall formation. The sequence is that of UDP-N-acetylmuramate--L-alanine ligase from Polaromonas naphthalenivorans (strain CJ2).